We begin with the raw amino-acid sequence, 126 residues long: MALSKEDILNAIAEMSVMDVVELVAAMEEKFGVSAAAAVAVAAPAAGGDAGGAAAEQTEFDVILASAGEKKVNVIKAVRGITGLGLKEAKELVDGAPSPIKEGVSKDDAEEAKKLLEEAGASVELK.

It belongs to the bacterial ribosomal protein bL12 family. In terms of assembly, homodimer. Part of the ribosomal stalk of the 50S ribosomal subunit. Forms a multimeric L10(L12)X complex, where L10 forms an elongated spine to which 2 to 4 L12 dimers bind in a sequential fashion. Binds GTP-bound translation factors.

Functionally, forms part of the ribosomal stalk which helps the ribosome interact with GTP-bound translation factors. Is thus essential for accurate translation. This is Large ribosomal subunit protein bL12 from Saccharophagus degradans (strain 2-40 / ATCC 43961 / DSM 17024).